Here is a 190-residue protein sequence, read N- to C-terminus: MVRVSTSEFRVGLRIEIDGQPYLILQNDFVKPGKGQAFNRIKVKNFLTGRVIERTYKSGESVETADIVERSMRLLYTDQEGATFMDDETFEQEVVFWEKLENIRQWLLEDTIYTLVLYNGDVVAVEPPIFMELSIAETAPGVRGDTASGRVLKPAVTNTGAKIMVPIFIDEGELVKVDTRTGSYESRVSK.

This sequence belongs to the elongation factor P family.

The protein localises to the cytoplasm. The protein operates within protein biosynthesis; polypeptide chain elongation. Functionally, involved in peptide bond synthesis. Stimulates efficient translation and peptide-bond synthesis on native or reconstituted 70S ribosomes in vitro. Probably functions indirectly by altering the affinity of the ribosome for aminoacyl-tRNA, thus increasing their reactivity as acceptors for peptidyl transferase. This Chlamydia pneumoniae (Chlamydophila pneumoniae) protein is Elongation factor P 2 (efp2).